The chain runs to 724 residues: Outer spore wall protein 2 (724 aa).

Disordered stretches follow at residues 407–427 and 477–497; these read NSGQ…KNRV and TSGG…YDDK.

The protein resides in the cytoplasm. It is found in the prospore membrane. Its function is as follows. May be involved in a late step of spore wall assembly. The sequence is that of Outer spore wall protein 2 (OSW2) from Saccharomyces cerevisiae (strain ATCC 204508 / S288c) (Baker's yeast).